We begin with the raw amino-acid sequence, 158 residues long: Nuclear cap-binding protein subunit 2 (158 aa).

Residues tyrosine 17, tyrosine 40, 109–113 (RADWD), 120–124 (RQYGR), and 130–131 (QV) contribute to the mRNA site. The region spanning 37 to 115 (CTLYVGNLSY…RVIRADWDAG (79 aa)) is the RRM domain. Positions 123–158 (GRGKHGGQVRDEYRKDYDPERGGYNRAIAQKGGDRQ) are disordered. Residues 130–145 (QVRDEYRKDYDPERGG) are compositionally biased toward basic and acidic residues.

This sequence belongs to the RRM NCBP2 family. Component of the nuclear cap-binding complex (CBC), a heterodimer composed of ncbp-1 and ncbp-2 that interacts with m7GpppG-capped RNA.

It is found in the nucleus. In terms of biological role, component of the cap-binding complex (CBC), which binds co-transcriptionally to the 5' cap of pre-mRNAs and is involved in various processes such as pre-mRNA splicing and RNA-mediated gene silencing (RNAi). The CBC complex is involved in miRNA-mediated RNA interference and is required for primary microRNAs (miRNAs) processing. In the CBC complex, ncbp-2 recognizes and binds capped RNAs (m7GpppG-capped RNA) but requires ncbp-1 to stabilize the movement of its N-terminal loop and lock the CBC into a high affinity cap-binding state with the cap structure. The protein is Nuclear cap-binding protein subunit 2 (ncbp-2) of Caenorhabditis elegans.